A 345-amino-acid chain; its full sequence is N-acetyl-gamma-glutamyl-phosphate reductase (345 aa).

Residue cysteine 149 is part of the active site.

Belongs to the NAGSA dehydrogenase family. Type 1 subfamily.

The protein resides in the cytoplasm. The enzyme catalyses N-acetyl-L-glutamate 5-semialdehyde + phosphate + NADP(+) = N-acetyl-L-glutamyl 5-phosphate + NADPH + H(+). It functions in the pathway amino-acid biosynthesis; L-arginine biosynthesis; N(2)-acetyl-L-ornithine from L-glutamate: step 3/4. Catalyzes the NADPH-dependent reduction of N-acetyl-5-glutamyl phosphate to yield N-acetyl-L-glutamate 5-semialdehyde. This chain is N-acetyl-gamma-glutamyl-phosphate reductase, found in Marinobacter nauticus (strain ATCC 700491 / DSM 11845 / VT8) (Marinobacter aquaeolei).